The sequence spans 398 residues: L-talarate/galactarate dehydratase (398 aa).

Substrate contacts are provided by residues 46-48 (DAK), 82-83 (KR), and Lys195. The active-site Proton acceptor is the Lys197. Position 226 (Asp226) interacts with Mg(2+). Asn228 serves as a coordination point for substrate. Mg(2+) is bound by residues Glu252 and Glu278. His328 functions as the Proton donor/acceptor in the catalytic mechanism. Glu348 provides a ligand contact to substrate.

Belongs to the mandelate racemase/muconate lactonizing enzyme family. Homooctamer; tetramer of dimers. Mg(2+) serves as cofactor.

The enzyme catalyses L-altrarate = 5-dehydro-4-deoxy-D-glucarate + H2O. It carries out the reaction galactarate = 5-dehydro-4-deoxy-D-glucarate + H2O. It catalyses the reaction L-altrarate = galactarate. With respect to regulation, competitively inhibited by tartronate. Functionally, catalyzes the efficient dehydration of both L-talarate (also called L-altrarate) and galactarate to 5-keto-4-deoxy-D-glucarate (5-KDG). Also catalyzes the epimerization of L-talarate to galactarate; epimerization occurs in competition with dehydration. Is required for the utilization of L-talarate as a carbon source. Also functions in galactarate utilization. Is not active on other acid sugars. The protein is L-talarate/galactarate dehydratase of Salmonella typhimurium (strain LT2 / SGSC1412 / ATCC 700720).